The chain runs to 247 residues: Agamous-like MADS-box protein AGL28 (247 aa).

In terms of domain architecture, MADS-box spans 6 to 66 (LGRRKIELVK…GKAYSFGHPN (61 aa)). Positions 91 to 168 (TKLRIQMLNE…VDEKVAQLHH (78 aa)) form a coiled coil.

In terms of tissue distribution, expressed in roots, leaves and shoot apices.

It is found in the nucleus. Its function is as follows. Probable transcription factor that may function as a floral promoter operating upstream of known floral activators in the autonomous pathway. The sequence is that of Agamous-like MADS-box protein AGL28 from Arabidopsis thaliana (Mouse-ear cress).